The primary structure comprises 1032 residues: Toll-like receptor 9 (1032 aa).

The N-terminal stretch at 1–25 (MGFCRSALHPLSLLVQAIMLAMTLA) is a signal peptide. The Extracellular segment spans residues 26–818 (LGTLPAFLPC…CLDEALSWDC (793 aa)). Cysteines 35 and 45 form a disulfide. 47 to 51 (WLFLK) lines the DNA pocket. 14 LRR repeats span residues 62-85 (RGNV…DFAH), 87-110 (PSLR…HFPC), 122-147 (VPTL…SLIS), 150-166 (LSHT…LAGL), 167-190 (HALR…ALEV), 198-221 (LGNL…LPSS), 223-242 (EYLL…DLAN), 243-268 (LTAL…CMEC), 283-306 (LSRL…WFRG), 308-332 (GNLR…AFQG), 333-356 (LTQL…HLSL), 363-386 (LVAL…TLRP), 390-413 (LPML…IFRA), and 415-440 (PGLR…MGEA). The N-linked (GlcNAc...) asparagine glycan is linked to Asn64. Residues 72 to 77 (SNRIHH) and 95 to 109 (KWNC…MHFP) contribute to the DNA site. Cys98 and Cys110 form a disulfide bridge. N-linked (GlcNAc...) asparagine glycosylation is present at Asn129. Tyr132 contributes to the DNA binding site. Cys178 and Cys184 are disulfide-bonded. 179 to 181 (YYK) provides a ligand contact to DNA. Asn200 carries N-linked (GlcNAc...) asparagine glycosylation. Residue Tyr208 participates in DNA binding. N-linked (GlcNAc...) asparagine glycosylation is found at Asn210 and Asn242. Intrachain disulfides connect Cys255–Cys268 and Cys258–Cys265. 2 S-palmitoyl cysteine lipidation sites follow: Cys258 and Cys265. An N-linked (GlcNAc...) asparagine glycan is attached at Asn300. Residue Asn340 is glycosylated (N-linked (GlcNAc...) asparagine). Asn469, Asn474, and Asn513 each carry an N-linked (GlcNAc...) asparagine glycan. 12 LRR repeats span residues 470–494 (CSTL…MFAQ), 496–519 (SHLQ…QFLP), 520–543 (LTGL…SFTE), 545–572 (PRLE…SFVA), 574–598 (LRTL…LCST), 600–622 (LRAL…LYLH), 627–650 (LSGL…TLRN), 652–675 (PKSL…SLHF), 676–699 (LPKL…SLPA), 701–723 (TRLR…FFSK), 724–747 (AKEL…WFGP), and 749–772 (ASAL…AFMD). Cys470 and Cys500 are disulfide-bonded. N-linked (GlcNAc...) asparagine glycosylation is present at Asn567. Residue Asn694 is glycosylated (N-linked (GlcNAc...) asparagine). N-linked (GlcNAc...) asparagine glycosylation occurs at Asn731. Disulfide bonds link Cys764/Cys790 and Cys766/Cys809. Residues 819-839 (FALSLLAVALGLGVPMLHHLC) form a helical membrane-spanning segment. The Cytoplasmic segment spans residues 840–1032 (GWDLWYCFHL…RNFCQGPTAE (193 aa)). The TIR domain occupies 868–1013 (LPYDAFVVFD…SFWAQLGMAL (146 aa)).

The protein belongs to the Toll-like receptor family. Monomer and homodimer. Exists as a monomer in the absence of unmethylated cytidine-phosphate-guanosine (CpG) ligand. Proteolytic processing of an insertion loop (Z-loop) is required for homodimerization upon binding to the unmethylated CpG ligand leading to its activation. Interacts with MYD88 via their respective TIR domains. Interacts with BTK. Interacts (via transmembrane domain) with UNC93B1. Interacts with CD300LH; the interaction may promote full activation of TLR9-triggered innate responses. Interacts with CNPY3 and HSP90B1; this interaction is required for proper folding in the endoplasmic reticulum. Interacts with SMPDL3B. Interacts with CD82; this interaction is essential for TLR9-dependent myddosome formation in response to CpG stimulation. In terms of processing, activated by proteolytic cleavage of the flexible loop between repeats LRR14 and LRR15 within the ectodomain. Cleavage requires UNC93B1. Proteolytically processed by first removing the majority of the ectodomain by either asparagine endopeptidase (AEP) or a cathepsin followed by a trimming event that is solely cathepsin mediated and required for optimal receptor signaling. Palmitoylated by ZDHHC3 in the Golgi regulates TLR9 trafficking from the Golgi to endosomes. Depalmitoylation by PPT1 controls the release of TLR9 from UNC93B1 in endosomes. In terms of tissue distribution, highly expressed in spleen, lymph node, tonsil and peripheral blood leukocytes, especially in plasmacytoid pre-dendritic cells. Levels are much lower in monocytes and CD11c+ immature dendritic cells. Also detected in lung and liver.

Its subcellular location is the endoplasmic reticulum membrane. The protein localises to the early endosome membrane. The protein resides in the lysosome. It localises to the cytoplasmic vesicle. It is found in the phagosome. Its subcellular location is the golgi apparatus membrane. Functionally, key component of innate and adaptive immunity. TLRs (Toll-like receptors) control host immune response against pathogens through recognition of molecular patterns specific to microorganisms. TLR9 is a nucleotide-sensing TLR which is activated by unmethylated cytidine-phosphate-guanosine (CpG) dinucleotides. Acts via MYD88 and TRAF6, leading to NF-kappa-B activation, cytokine secretion and the inflammatory response. Controls lymphocyte response to Helicobacter infection. Upon CpG stimulation, induces B-cell proliferation, activation, survival and antibody production. The chain is Toll-like receptor 9 (TLR9) from Homo sapiens (Human).